We begin with the raw amino-acid sequence, 337 residues long: Phosphate acyltransferase (337 aa).

Belongs to the PlsX family. Homodimer. Probably interacts with PlsY.

The protein localises to the cytoplasm. It catalyses the reaction a fatty acyl-[ACP] + phosphate = an acyl phosphate + holo-[ACP]. The protein operates within lipid metabolism; phospholipid metabolism. Catalyzes the reversible formation of acyl-phosphate (acyl-PO(4)) from acyl-[acyl-carrier-protein] (acyl-ACP). This enzyme utilizes acyl-ACP as fatty acyl donor, but not acyl-CoA. The protein is Phosphate acyltransferase of Acidobacterium capsulatum (strain ATCC 51196 / DSM 11244 / BCRC 80197 / JCM 7670 / NBRC 15755 / NCIMB 13165 / 161).